The primary structure comprises 198 residues: Remorin (198 aa).

Residues 1–11 (MAELEAKKVEI) are compositionally biased toward basic and acidic residues. A disordered region spans residues 1–24 (MAELEAKKVEIVDPAPPAPGPVEA). Residues 97–184 (EESEKSKAEN…LKAEELAAKY (88 aa)) are a coiled coil.

This sequence belongs to the remorin family. Post-translationally, the N-terminus is blocked. Phosphorylated.

Its subcellular location is the cell membrane. Its function is as follows. Binds to both simple and complex galacturonides. May be involved in cell-to-cell signaling and molecular transport. The chain is Remorin from Solanum tuberosum (Potato).